A 152-amino-acid polypeptide reads, in one-letter code: Transcriptional regulator MraZ (152 aa).

SpoVT-AbrB domains lie at 5–52 (ATTL…PLPE) and 81–124 (ADDC…NEDA).

Belongs to the MraZ family. As to quaternary structure, forms oligomers.

Its subcellular location is the cytoplasm. It localises to the nucleoid. The sequence is that of Transcriptional regulator MraZ from Idiomarina loihiensis (strain ATCC BAA-735 / DSM 15497 / L2-TR).